The chain runs to 416 residues: Iron-regulated transcriptional activator AFT2 (416 aa).

Residue Asp53 coordinates Zn(2+). DNA contacts are provided by Arg54, His55, Lys58, Ile74, Glu75, Arg76, Ser77, Asp78, and Lys81. His55 is a Zn(2+) binding site. Cys86 serves as a coordination point for Zn(2+). Residue Ser88 participates in DNA binding. Residue Cys109 participates in Zn(2+) binding. DNA is bound by residues Val119 and Arg120. Positions 133 and 135 each coordinate Zn(2+). Residues Gln157 and Asn159 each coordinate DNA. The CDC [2Fe-2S] cluster binding motif motif lies at 187-189; the sequence is CDC.

As to quaternary structure, homodimer. Dimerization decreases the DNA-binding activity.

The protein localises to the nucleus. Its activity is regulated as follows. Dimerization via the binding of Fe(2+) or a [2Fe-2S] cluster decreases the DNA-binding activity. Its function is as follows. Transcription factor required for iron homeostasis and resistance to oxidative stress. With AFT1, activates the gene expression in response to low-iron conditions, also called iron regulon. Recognizes the consensus iron-responsive element (Fe-RE) sequence 5'-CACCC-3' in the promoters of target genes. The transcription activation by AFT1 and AFT2 depends on the mitochondrial iron-sulfur protein biosynthesis pathway. In high iron condition, the presence of iron leads to dimerization, which in turn leads to a decrease in DNA affinity. The protein is Iron-regulated transcriptional activator AFT2 of Saccharomyces cerevisiae (strain ATCC 204508 / S288c) (Baker's yeast).